A 485-amino-acid polypeptide reads, in one-letter code: MLERLKAPWSAALQRKYFDLGIWTAPISPMALTMLNGLLIKDSSPPMLLHQVNKTAQLDTFNYQSCFMQSVFDHFPEILFIHRTYNPRGKVLYTFLVDGPRVQLEGHLARAVYFAIPAKEDTEGLAQMFQVFKKFNPAWERVCTILVDPHFLPLPILAMEFPTAEVLLSAFHICKFLQAKFYQLSLERPVERLLLTSLQSTMCSATAGNLRKLYTLLSNCIPPAKLPELHSHWLLNDRIWLAHRWRSRAESSHYFQSLEVTTHILSQFFGTTPSEKQGMASLFRYMQQNSADKANFNQGLCAQNNHAPSDTIPESPKLEQLVESHIQHSLNAICTGPAAQLCLGELAVVQKSTHLIGSGSEKMNIQILEDTHKVQPQPPASCSCYFNQAFHLPCRHILAMLSARRQVLQPDMLPAQWTAGCATSLDSILGSKWSETLDKHLAVTHLTEEVGQLLQHCTKEEFERRYSTLRELADSWIGPYEQVQL.

The SWIM-type zinc-finger motif lies at 363 to 405 (MNIQILEDTHKVQPQPPASCSCYFNQAFHLPCRHILAMLSARR).

This Homo sapiens (Human) protein is Zinc finger SWIM domain-containing protein 1 (ZSWIM1).